The chain runs to 256 residues: Pimeloyl-[acyl-carrier protein] methyl ester esterase (256 aa).

The AB hydrolase-1 domain maps to 15–242; it reads HLVLLHGWGL…AAHAPFISHP (228 aa). Residues Trp-22, 82 to 83, and 143 to 147 contribute to the substrate site; these read SL and FLALQ. The active-site Nucleophile is the Ser-82. Residues Asp-207 and His-235 contribute to the active site. Residue His-235 participates in substrate binding.

This sequence belongs to the AB hydrolase superfamily. Carboxylesterase BioH family. In terms of assembly, monomer.

It localises to the cytoplasm. It catalyses the reaction 6-carboxyhexanoyl-[ACP] methyl ester + H2O = 6-carboxyhexanoyl-[ACP] + methanol + H(+). Its pathway is cofactor biosynthesis; biotin biosynthesis. The physiological role of BioH is to remove the methyl group introduced by BioC when the pimeloyl moiety is complete. It allows to synthesize pimeloyl-ACP via the fatty acid synthetic pathway through the hydrolysis of the ester bonds of pimeloyl-ACP esters. This is Pimeloyl-[acyl-carrier protein] methyl ester esterase from Escherichia coli O17:K52:H18 (strain UMN026 / ExPEC).